The primary structure comprises 822 residues: Penicillin-binding protein 1A (822 aa).

Over 1 to 5 the chain is Cytoplasmic; it reads MRLLK. Residues 6–26 traverse the membrane as a helical; Signal-anchor for type II membrane protein segment; it reads FLWWTCVTLICGVLLSFSGAY. At 27-822 the chain is on the periplasmic side; the sequence is LYLSPSLPSV…DDEGAPIDLF (796 aa). The tract at residues 48-216 is transglycosylase; the sequence is LKVYSEDGKL…SRYNPLVNPT (169 aa). The active-site Proton donor; for transglycosylase activity is Glu-86. Positions 403 to 744 are transpeptidase; the sequence is IRVQRQEDGT…GTVALPIWIR (342 aa). The active-site Acyl-ester intermediate; for transpeptidase activity is Ser-461. 2 disordered regions span residues 614 to 654 and 790 to 822; these read AADA…FEPT and KNEDTPPSVNELPPGSFPGSPLPDDEGAPIDLF. Over residues 812 to 822 the composition is skewed to acidic residues; sequence PDDEGAPIDLF.

In the N-terminal section; belongs to the glycosyltransferase 51 family. The protein in the C-terminal section; belongs to the transpeptidase family.

The protein localises to the cell inner membrane. It carries out the reaction [GlcNAc-(1-&gt;4)-Mur2Ac(oyl-L-Ala-gamma-D-Glu-L-Lys-D-Ala-D-Ala)](n)-di-trans,octa-cis-undecaprenyl diphosphate + beta-D-GlcNAc-(1-&gt;4)-Mur2Ac(oyl-L-Ala-gamma-D-Glu-L-Lys-D-Ala-D-Ala)-di-trans,octa-cis-undecaprenyl diphosphate = [GlcNAc-(1-&gt;4)-Mur2Ac(oyl-L-Ala-gamma-D-Glu-L-Lys-D-Ala-D-Ala)](n+1)-di-trans,octa-cis-undecaprenyl diphosphate + di-trans,octa-cis-undecaprenyl diphosphate + H(+). The catalysed reaction is Preferential cleavage: (Ac)2-L-Lys-D-Ala-|-D-Ala. Also transpeptidation of peptidyl-alanyl moieties that are N-acyl substituents of D-alanine.. The protein operates within cell wall biogenesis; peptidoglycan biosynthesis. Functionally, cell wall formation. Synthesis of cross-linked peptidoglycan from the lipid intermediates. The enzyme has a penicillin-insensitive transglycosylase N-terminal domain (formation of linear glycan strands) and a penicillin-sensitive transpeptidase C-terminal domain (cross-linking of the peptide subunits). This chain is Penicillin-binding protein 1A (mrcA), found in Pseudomonas aeruginosa (strain ATCC 15692 / DSM 22644 / CIP 104116 / JCM 14847 / LMG 12228 / 1C / PRS 101 / PAO1).